The chain runs to 351 residues: Dihydroorotate dehydrogenase (quinone) (351 aa).

FMN-binding positions include 65 to 69 (AGLDK) and Thr89. A substrate-binding site is contributed by Lys69. 114 to 118 (NRLGF) provides a ligand contact to substrate. Asn150 and Asn183 together coordinate FMN. Asn183 is a binding site for substrate. The Nucleophile role is filled by Ser186. Asn188 is a substrate binding site. FMN contacts are provided by Lys228 and Thr256. 257–258 (NT) is a substrate binding site. Residues Gly279, Gly308, and 329–330 (YT) each bind FMN.

The protein belongs to the dihydroorotate dehydrogenase family. Type 2 subfamily. In terms of assembly, monomer. FMN serves as cofactor.

The protein resides in the cell membrane. It carries out the reaction (S)-dihydroorotate + a quinone = orotate + a quinol. The protein operates within pyrimidine metabolism; UMP biosynthesis via de novo pathway; orotate from (S)-dihydroorotate (quinone route): step 1/1. Its function is as follows. Catalyzes the conversion of dihydroorotate to orotate with quinone as electron acceptor. This is Dihydroorotate dehydrogenase (quinone) from Acidovorax ebreus (strain TPSY) (Diaphorobacter sp. (strain TPSY)).